The chain runs to 405 residues: Dematin (405 aa).

3 disordered regions span residues 1-29, 81-100, and 108-332; these read MERLQKQPLTSPGSVSSSRDSSVPGSPSS, SRECSLSPKSTSPPPSPEVW, and IISQ…DRGN. A compositionally biased stretch (low complexity) spans 11–29; sequence SPGSVSSSRDSSVPGSPSS. A phosphoserine mark is found at S16, S18, S26, S92, S96, S110, and S113. The segment covering 113–124 has biased composition (low complexity); it reads STPRTTGTPRTS. Residue T114 is modified to Phosphothreonine. 2 positions are modified to phosphoserine: S156 and S226. Over residues 216–228 the composition is skewed to acidic residues; the sequence is EEEEEEEDDDSEE. Positions 224 to 308 are interaction with RASGRF2; sequence DDSEEEIKAI…SRLQSTEFSP (85 aa). 2 stretches are compositionally biased toward basic and acidic residues: residues 229–242 and 252–261; these read EIKAIRERQKEELS and ILKEEMEKSL. 8 positions are modified to phosphoserine: S269, S279, S289, S303, S315, S333, S372, and S383. Over residues 277-292 the composition is skewed to low complexity; the sequence is HTSLHSGTSKSSSLPS. Residues 294–322 show a composition bias toward polar residues; the sequence is GRTTLSRLQSTEFSPSGSEAGSPGLQNGE. Positions 337–405 constitute an HP domain; that stretch reads VLEQKIYPYE…NELKKKASLF (69 aa). S403 is modified (phosphoserine; by PKA).

The protein belongs to the villin/gelsolin family. Monomeric (isoform 2); under reducing conditions. Self-associates. Exists under oxidizing condition as a trimer of two isoforms 2 and isoform 1 linked by disulfide bonds. Found in a complex with DMTN, F-actin and spectrin. Found in a complex with ADD2, DMTN and SLC2A1. Interacts with F-actin, ITPKB and spectrin. Isoform 2 interacts with SLC2A1 (via C-terminus cytoplasmic region). Interacts with RASGRF2. Post-translationally, phosphorylated. Phosphorylation at Ser-403 by PKA causes the C-terminal headpiece domain to associate with the N-terminal core domain, and leads to the inhibition of its actin bundling activity. As to expression, expressed in platelets. Isoform 1 and isoform 2 are expressed in mature erythrocytes (at protein level).

It is found in the cytoplasm. Its subcellular location is the cytosol. The protein localises to the perinuclear region. It localises to the cytoskeleton. The protein resides in the cell membrane. It is found in the membrane. Its subcellular location is the endomembrane system. The protein localises to the cell projection. Membrane-cytoskeleton-associated protein with F-actin-binding activity that induces F-actin bundles formation and stabilization. Its F-actin-bundling activity is reversibly regulated upon its phosphorylation by the cAMP-dependent protein kinase A (PKA). Binds to the erythrocyte membrane glucose transporter-1 SLC2A1/GLUT1, and hence stabilizes and attaches the spectrin-actin network to the erythrocytic plasma membrane. Plays a role in maintaining the functional integrity of PKA-activated erythrocyte shape and the membrane mechanical properties. Also plays a role as a modulator of actin dynamics in fibroblasts; acts as a negative regulator of the RhoA activation pathway. In platelets, functions as a regulator of internal calcium mobilization across the dense tubular system that affects platelet granule secretion pathways and aggregation. Also required for the formation of a diverse set of cell protrusions, such as filopodia and lamellipodia, necessary for platelet cell spreading, motility and migration. Acts as a tumor suppressor and inhibits malignant cell transformation. This Mus musculus (Mouse) protein is Dematin (Dmtn).